The chain runs to 1560 residues: MGLWGMLAFPLGFLLASVLLVASAPATPESPGCSNKEQQVTVSHTYKIDVPKSALVQVETDPQSLSDDGTSLLAPGEDGEEQNIIFRHNIRLQTPQKNCDLADSVQDLLARMKKLEEEMAELKEQCNTNRCCQGAADLSRHCSGHGTFLPETCSCHCDQGWEGADCDQPTCPGACNGHGRCVDGQCVCDAPYVGVDCAYAACPQDCSGHGVCVQGVCQCHEDFTAEDCSEQRCPGDCSGNGFCDTGECYCEMGFTGPDCSQVVAPQGLQLLKSTENSLLVSWEPSSEVDYYLLSYYPLGKEQATKQVRVPKEQHTYDITGLLPGTKYIVTLRNVKKDISSSPQHLLATTDLAVVGTAWVNEETETSLDVEWENPLTEVDYYKLRYGPLTGQEVTEVTVPKSRDPKSRYDITGLQPGTEYKITVVPIRGDLEGKPILLNGRTEIDGPTNVVTNQVTEDTASVSWDPVRADIDKYVVRYIAPDGETKEKAVPKDQSSTVLTGLKPGEAYKVFVWAERGNQGSKKADTKALTEIDSPENLVTDRVTENSLSVSWDPVEADIDRYVVSYTSVDGETKQVPVKKDQRSTVLTGLSPGVEYKVYVWAEKGDRESKKANTKAPTDIDSPKNLVTDQVTENTLSVSWDPVQANIDRYMVSYTSADGETREVPVPKEKSSTVLTGLRPGVEYKVHVWAQKGTQESRKANTKAPTDIDGPKNLVTDQVTETTLSVSWDPVEADIDRYMVRYTSPDGETKEVPVSKDKSSTVLRGLRPGVEYKVDVWAQKGAQDSRKANTKAPTDIDSPKNLVTEQVTESTATVSWDPVEADIDRYVVRYTSVDGETREFLVGKDQTSTVLTGMRPGVEYQVDVWAQKGTQESRKTSTKAPTDIDGPKNLVTDQVTETTLSVSWDPVEADIDRYMVRYTSPDGETKEVPVSKDKSSTVLRGLRPGVEYKVDVWAQKGAQDSRKANTKAPTDIDSPKNLAIDQVTETTLSVSWDPVQADIDRYVVRYTSADGESKEFLIGKEQRSTVLTGLRPGVEYKVEVWAQKGARESKKANTEGHTDIDSPKNLVTNQVTENTATISWDPVQADIDRYMVRYTSADGETREIPVRKEKSSTVLTGLRPGVEYTVQVWAQKGARESKKAKTKAPTEIDSPKNLVTNRVTENTATISWDPVRANIDRYMVRYTSADGETKEIPVSKDQSSTILTGLKPGMEYTIHVWAQKGARESKKADTKALTEIDPPRNLRPFGVTHSGGVLTWLPPSAQIDGYILTYQFPNGTVKEVELPRGQQRFELQDLEQGVTYPVSLVAFKGNQRSRTVSTTLSTVDARFPHPSDCSQVQQNTNAASGLYTIYLNGDASRPMQVYCDMDTDGGGWIVFQRRNTGQLDFFKRWRSYVEGFGDPMKEFWLGLDKLHNLTTGTTTRYEVRADLQTFNESAYAVYDFFQVASSKERYKLSVGKYRGTAGDALTYHNGWKFTTFDRDNDIALSNCALTHHGGWWYKNCHLANPNGKYGETKHSEGVNWEPWKGHEFSIPYVELKIRPFGYSRDRFSGRKKRSIGKARMF.

The first 26 residues, 1 to 26 (MGLWGMLAFPLGFLLASVLLVASAPA), serve as a signal peptide directing secretion. EGF-like domains lie at 167 to 198 (DQPT…VDCA), 199 to 229 (YAAC…EDCS), and 230 to 260 (EQRC…PDCS). Intrachain disulfides connect cysteine 171–cysteine 181, cysteine 175–cysteine 186, cysteine 188–cysteine 197, cysteine 202–cysteine 212, cysteine 206–cysteine 217, cysteine 219–cysteine 228, cysteine 233–cysteine 243, cysteine 237–cysteine 248, and cysteine 250–cysteine 259. 12 consecutive Fibronectin type-III domains span residues 264 to 353 (APQG…DLAV), 354 to 444 (VGTA…TEID), 445 to 532 (GPTN…TEID), 533 to 622 (SPEN…IDSP), 623 to 706 (KNLV…APTD), 709 to 798 (GPKN…IDSP), 799 to 882 (KNLV…APTD), 885 to 970 (GPKN…APTD), 973 to 1062 (SPKN…IDSP), 1063 to 1144 (KNLV…TKAP), 1149 to 1238 (SPKN…IDPP), and 1239 to 1325 (RNLR…VDAR). Disordered regions lie at residues 868–888 (GTQE…GPKN) and 1044–1063 (GARE…DSPK). Basic and acidic residues predominate over residues 1044 to 1061 (GARESKKANTEGHTDIDS). A Fibrinogen C-terminal domain is found at 1323 to 1540 (DARFPHPSDC…YVELKIRPFG (218 aa)). A glycan (N-linked (GlcNAc...) asparagine) is linked at asparagine 1411.

It belongs to the tenascin family. In terms of assembly, homohexamer. Highest expression in kidney followed by spleen and brain. In brain, highest expression is found in hippocampus, cerebellum and olfactory bulb. Expressed in aortic valve, corneal limbus. Expressed in ribs periosteum. During a fracture repair process, expression increases in cells of newly formed perichondrium/peristeum surrounding the cartalaginous callus.

It localises to the secreted. Its subcellular location is the extracellular space. The protein localises to the extracellular matrix. Extracellular matrix protein that seems to be a ligand for ITGA8:ITGB1, ITGAV:ITGB1 and ITGA4:ITGB1. Involved in neurite outgrowth and cell migration in hippocampal explants. During endochondral bone formation, inhibits proliferation and differentiation of proteoblasts mediated by canonical WNT signaling. In tumors, stimulates angiogenesis by elongation, migration and sprouting of endothelial cells. Expressed in most mammary tumors, may facilitate tumorigenesis by supporting the migratory behavior of breast cancer cells. In Mus musculus (Mouse), this protein is Tenascin-N.